Here is a 910-residue protein sequence, read N- to C-terminus: Protein translocase subunit SecA (910 aa).

ATP contacts are provided by residues Q87, 105–109 (GEGKT), and D508. Positions 848-910 (RLSQSQFQHQ…KYKHCHGQLS (63 aa)) are disordered. Low complexity predominate over residues 869–880 (AQVQAAQQGVAQ). Zn(2+)-binding residues include C894, C896, C905, and H906. Positions 900 to 910 (KKYKHCHGQLS) are enriched in basic residues.

Belongs to the SecA family. Monomer and homodimer. Part of the essential Sec protein translocation apparatus which comprises SecA, SecYEG and auxiliary proteins SecDF-YajC and YidC. Zn(2+) is required as a cofactor.

Its subcellular location is the cell inner membrane. It localises to the cytoplasm. It carries out the reaction ATP + H2O + cellular proteinSide 1 = ADP + phosphate + cellular proteinSide 2.. Its function is as follows. Part of the Sec protein translocase complex. Interacts with the SecYEG preprotein conducting channel. Has a central role in coupling the hydrolysis of ATP to the transfer of proteins into and across the cell membrane, serving both as a receptor for the preprotein-SecB complex and as an ATP-driven molecular motor driving the stepwise translocation of polypeptide chains across the membrane. This is Protein translocase subunit SecA from Stenotrophomonas maltophilia (strain K279a).